The sequence spans 399 residues: Octopine dehydrogenase (399 aa).

Residues 10-13 (GGNG) and 35-38 (FADE) each bind NADH. Positions 118 and 143 each coordinate pyruvate. Gln118 serves as a coordination point for substrate. Residue Cys148 coordinates NAD(+). An L-arginine-binding site is contributed by Met206. Position 212 (His212) interacts with pyruvate. His212 is a catalytic residue. Residue Arg324 coordinates NAD(+).

The protein belongs to the lysopine/nopaline/octopine/opine/vitopine dehydrogenases family.

The catalysed reaction is D-octopine + NAD(+) + H2O = L-arginine + pyruvate + NADH + H(+). Its activity is regulated as follows. Agmatine acts as a competitive inhibitor of the condensation reaction where the L-arginine and agmatine substrates compete for the same site. Functionally, catalyzes the reverse reaction of octopine dehydrogenation. Acts on L-arginine in preference to other substrates such as canavanine, cysteine, L-alanine, ornithine or norvaline, owing to the presence of the positively charged guanidium group. This Pecten maximus (King scallop) protein is Octopine dehydrogenase.